The sequence spans 210 residues: MHPFFQELQQGSQKLGLSLSDEALTLLLKYQDALVLWNKAYNLTAIRDPKEMLVKHLLDSLSILKDLPAGRLLDVGTGGGMPGMIIALCQPERSCVLLDSNGKKIRFLKQFIADLKLKNVIAVQTRVENQDTIDELGQFDVITSRAFASLTDFVGAARPYLHEQSIIAAMKGLIPVEEMEELKQEFSCKVIELHVPRLDEQRHLLLLQRI.

S-adenosyl-L-methionine-binding positions include glycine 76, methionine 81, 127 to 128, and arginine 145; that span reads VE.

Belongs to the methyltransferase superfamily. RNA methyltransferase RsmG family.

The protein resides in the cytoplasm. It catalyses the reaction guanosine(527) in 16S rRNA + S-adenosyl-L-methionine = N(7)-methylguanosine(527) in 16S rRNA + S-adenosyl-L-homocysteine. Specifically methylates the N7 position of guanine in position 527 of 16S rRNA. This is Ribosomal RNA small subunit methyltransferase G from Acinetobacter baumannii (strain SDF).